We begin with the raw amino-acid sequence, 611 residues long: Glutamine--fructose-6-phosphate aminotransferase [isomerizing] (611 aa).

C2 acts as the Nucleophile; for GATase activity in catalysis. A Glutamine amidotransferase type-2 domain is found at 2 to 219 (CGIVGAIAER…EGDIAEIRRD (218 aa)). 2 consecutive SIS domains span residues 287–427 (AAEL…VQKR) and 460–601 (VSEL…VDQP). K606 acts as the For Fru-6P isomerization activity in catalysis.

In terms of assembly, homodimer.

The protein resides in the cytoplasm. It catalyses the reaction D-fructose 6-phosphate + L-glutamine = D-glucosamine 6-phosphate + L-glutamate. Catalyzes the first step in hexosamine metabolism, converting fructose-6P into glucosamine-6P using glutamine as a nitrogen source. The sequence is that of Glutamine--fructose-6-phosphate aminotransferase [isomerizing] from Pseudomonas aeruginosa (strain ATCC 15692 / DSM 22644 / CIP 104116 / JCM 14847 / LMG 12228 / 1C / PRS 101 / PAO1).